The following is a 200-amino-acid chain: Small ribosomal subunit protein mS26 (200 aa).

A mitochondrion-targeting transit peptide spans 1–27; the sequence is MLRALNRLAARPGGQPPTLLLLPVRGR. At Lys-159 the chain carries N6-acetyllysine.

The protein belongs to the mitochondrion-specific ribosomal protein mS26 family. In terms of assembly, component of the mitochondrial ribosome small subunit (28S) which comprises a 12S rRNA and about 30 distinct proteins.

The protein localises to the mitochondrion. The protein is Small ribosomal subunit protein mS26 (Mrps26) of Rattus norvegicus (Rat).